We begin with the raw amino-acid sequence, 409 residues long: Inactive serine protease 35 (409 aa).

An N-terminal signal peptide occupies residues 1 to 20 (MENTLLWLVILIPGWALSDG). N-linked (GlcNAc...) asparagine glycosylation is present at asparagine 90. Residues 124 to 404 (VYGTDSRFSI…ICLWIHGNAA (281 aa)) form the Peptidase S1 domain. Cysteine 154 and cysteine 170 are oxidised to a cystine. A compositionally biased stretch (basic residues) spans 188 to 207 (VLKMRNKGGRKKRRGSKRSR). The disordered stretch occupies residues 188–247 (VLKMRNKGGRKKRRGSKRSRREAESAGQSQAHLRESTTQRPGKKSRRGPRVTQGRPSFQW).

Belongs to the peptidase S1 family. In ovary, it localizes to the theca cells of pre-antral follicles, the theca and granulosa cells of pre-ovulatory and ovulatory follicles, as well as to the developing corpus luteum.

It is found in the secreted. The sequence is that of Inactive serine protease 35 (Prss35) from Mus musculus (Mouse).